Consider the following 250-residue polypeptide: Shieldin complex subunit 3 (250 aa).

Positions 28–83 (QDFPTRPLSRFIPWFPYDGSKLPLRPKRSPPVISEEAAEDVKQYLTISEHDAKSHS) are sufficient for interaction with MAD2L2. Polar residues predominate over residues 108 to 119 (LKEQTNSGNLGK). Residues 108-129 (LKEQTNSGNLGKQSEKGKQHKR) form a disordered region.

Component of the shieldin complex, consisting of SHLD1, SHLD2, SHLD3 and MAD2L2/REV7. Within the complex, SHLD2 forms a scaffold which interacts with a SHLD3-MAD2L2 subcomplex via its N-terminus, and with SHLD1 via its C-terminus. Interacts with ASTE1.

It is found in the chromosome. Functionally, component of the shieldin complex, which plays an important role in repair of DNA double-stranded breaks (DSBs). During G1 and S phase of the cell cycle, the complex functions downstream of TP53BP1 to promote non-homologous end joining (NHEJ) and suppress DNA end resection. Mediates various NHEJ-dependent processes including immunoglobulin class-switch recombination, and fusion of unprotected telomeres. The sequence is that of Shieldin complex subunit 3 from Homo sapiens (Human).